We begin with the raw amino-acid sequence, 98 residues long: MSVYKYYDLIRKPIITEKTTSISEQNKYTFYVNKFAKKLSLKRAIEAIFKVKVKKVNILNIKGKKKRFKGIIGTQINRKKAIVTLEKDHNIDYAGGIK.

Belongs to the universal ribosomal protein uL23 family. In terms of assembly, part of the 50S ribosomal subunit. Contacts protein L29, and trigger factor when it is bound to the ribosome.

Its function is as follows. One of the early assembly proteins it binds 23S rRNA. One of the proteins that surrounds the polypeptide exit tunnel on the outside of the ribosome. Forms the main docking site for trigger factor binding to the ribosome. The protein is Large ribosomal subunit protein uL23 of Rickettsia prowazekii (strain Madrid E).